Consider the following 610-residue polypeptide: ESX-5 secretion system protein EccA5 (610 aa).

357–364 (GPPGTGKT) provides a ligand contact to ATP.

Belongs to the CbxX/CfxQ family. As to quaternary structure, part of the ESX-5 / type VII secretion system (T7SS), which is composed of cytosolic and membrane components.

It localises to the cytoplasm. Part of an ESX-5 / type VII specialized secretion system (T7SS), which exports several proteins. EccA5 exhibits ATPase activity and may provide energy for the export of ESX-5 substrates. The sequence is that of ESX-5 secretion system protein EccA5 from Mycobacterium bovis (strain ATCC BAA-935 / AF2122/97).